Here is a 208-residue protein sequence, read N- to C-terminus: MGEPAFTSFPSPPVLGKLKRNMMPWALQKKREIHMAKAHRRRAARSALPMRLTSCIFRRPVTRIRSHPDNQVRRRKGDEHLEKPQQLCAYRRLQALQPCSSQGEGSSPLHLESVLSILAPGTAGESLDRAGAERVRSPLEPTPGRFPAVAGGPTPGMGCQLPPPLSGQLVTPADIRRQARRVKKARERLAKALQADRLARQAEMLTCR.

Belongs to the MBD3L family.

In Homo sapiens (Human), this protein is Methyl-CpG-binding domain protein 3-like 3 (MBD3L3).